A 140-amino-acid polypeptide reads, in one-letter code: Ubiquitin-like protein ATG12 (140 aa).

The disordered stretch occupies residues 1–52; sequence MAEEPQTVLQLPPSSAAGGEGLTDVSPETTTPEPPSSAAVSPGTEEPAGDTK. Positions 25–42 are enriched in low complexity; the sequence is VSPETTTPEPPSSAAVSP. Gly-140 is covalently cross-linked (Glycyl lysine isopeptide (Gly-Lys) (interchain with K-? in acceptor protein)).

It belongs to the ATG12 family. In terms of assembly, forms a conjugate with ATG5. Part of the minor complex composed of 4 sets of ATG12-ATG5 and ATG16L1 (400 kDa); this complex interacts with ATG3 leading to disruption of ATG7 interaction and promotion of ATG8-like proteins lipidation. Forms an 800-kDa complex composed of ATG12-ATG5 and ATG16L2. Interacts with DHX58/RIG-1, IFIH1/MDA5 and MAVS/IPS-1 in monomeric form as well as in ATG12-ATG5 conjugate. The interaction with MAVS is further enhanced upon vesicular stomatitis virus (VSV) infection. Interacts with ATG3; this interaction is essential for phosphatidylethanolamine (PE)-conjugated ATG8-like proteins formation. Interacts with ATG7. Interacts with ATG10. Interacts with TECPR1. Interacts with SH3BGRL. The ATG12-ATG5 conjugate interacts with PDCD6IP (via the BRO1 domain); this interaction is bridged by ATG12 and promotes multiple PDCD6IP-mediated functions such as endolysosomal trafficking, macroautophagy and exosome biogenesis. In terms of processing, acetylated by EP300.

It localises to the cytoplasm. Its subcellular location is the preautophagosomal structure membrane. Functionally, ubiquitin-like protein involved in autophagy vesicles formation. Conjugation with ATG5 through a ubiquitin-like conjugating system involving also ATG7 as an E1-like activating enzyme and ATG10 as an E2-like conjugating enzyme, is essential for its function. The ATG12-ATG5 conjugate acts as an E3-like enzyme which is required for lipidation of ATG8 family proteins and their association to the vesicle membranes. The ATG12-ATG5 conjugate also negatively regulates the innate antiviral immune response by blocking the type I IFN production pathway through direct association with RARRES3 and MAVS. Also plays a role in translation or delivery of incoming viral RNA to the translation apparatus. As part of the ATG8 conjugation system with ATG5 and ATG16L1, required for recruitment of LRRK2 to stressed lysosomes and induction of LRRK2 kinase activity in response to lysosomal stress. In Pongo abelii (Sumatran orangutan), this protein is Ubiquitin-like protein ATG12.